Here is a 583-residue protein sequence, read N- to C-terminus: Estrogen receptor (583 aa).

Residues 1-138 (MYPEESRGSG…GFEITKNTRF (138 aa)) form a modulating region. 2 NR C4-type zinc fingers span residues 139–159 (CAVCSDYASGYHYGVWSCEGC) and 175–199 (CPATNQCTIDKNRRKSCQACRLRKC). Residues 139 to 204 (CAVCSDYASG…RLRKCYEVGM (66 aa)) constitute a DNA-binding region (nuclear receptor). Positions 205–265 (MKGGMRKDRG…PGGRSSLNNM (61 aa)) are hinge. The segment at 220 to 263 (EKHGPAQRQTSQNLPTHKASPQDGRKRAMSSSSTSGPGGRSSLN) is disordered. In terms of domain architecture, NR LBD spans 266-501 (PPDQVLLLLQ…DLLLEMLDAH (236 aa)). The segment at 506-583 (PVKPSQSWSQ…GSHSDCTRIP (78 aa)) is disordered. A compositionally biased stretch (low complexity) spans 539-551 (ASSAGSSSGPQGS).

It belongs to the nuclear hormone receptor family. NR3 subfamily. Binds DNA as a homodimer. Can form a heterodimer with ER-beta.

The protein resides in the nucleus. In terms of biological role, the steroid hormones and their receptors are involved in the regulation of eukaryotic gene expression and affect cellular proliferation and differentiation in target tissues. This Oreochromis aureus (Israeli tilapia) protein is Estrogen receptor (esr1).